The chain runs to 901 residues: HTH-type transcriptional regulator MalT (901 aa).

39–46 (SPAGYGKT) serves as a coordination point for ATP. Residues 829–894 (ELIRTSPLTQ…DAVQHAQQLL (66 aa)) enclose the HTH luxR-type domain. The segment at residues 853-872 (NEQIAGELEVAATTIKTHIR) is a DNA-binding region (H-T-H motif).

This sequence belongs to the MalT family. As to quaternary structure, monomer in solution. Oligomerizes to an active state in the presence of the positive effectors ATP and maltotriose.

Activated by ATP and maltotriose, which are both required for DNA binding. Functionally, positively regulates the transcription of the maltose regulon whose gene products are responsible for uptake and catabolism of malto-oligosaccharides. Specifically binds to the promoter region of its target genes, recognizing a short DNA motif called the MalT box. The protein is HTH-type transcriptional regulator MalT of Escherichia fergusonii (strain ATCC 35469 / DSM 13698 / CCUG 18766 / IAM 14443 / JCM 21226 / LMG 7866 / NBRC 102419 / NCTC 12128 / CDC 0568-73).